We begin with the raw amino-acid sequence, 368 residues long: Probable leucine aminopeptidase ARB_03492 (368 aa).

Residues 1-18 (MKVSAIAAVAALAAVAVA) form the signal peptide. Asparagine 92 is a glycosylation site (N-linked (GlcNAc...) asparagine). Zn(2+) is bound by residues histidine 172 and aspartate 191. Residues asparagine 192 and asparagine 216 are each glycosylated (N-linked (GlcNAc...) asparagine). Zn(2+) contacts are provided by glutamate 230 and aspartate 257. A disulfide bridge connects residues cysteine 301 and cysteine 305. Histidine 334 provides a ligand contact to Zn(2+).

Belongs to the peptidase M28 family. M28E subfamily. Monomer. The cofactor is Zn(2+).

It localises to the secreted. Its function is as follows. Probable extracellular aminopeptidase which contributes to pathogenicity. The chain is Probable leucine aminopeptidase ARB_03492 from Arthroderma benhamiae (strain ATCC MYA-4681 / CBS 112371) (Trichophyton mentagrophytes).